The chain runs to 392 residues: DNA-directed RNA polymerase subunit Rpo1C (392 aa).

This sequence belongs to the RNA polymerase beta' chain family. Part of the RNA polymerase complex.

The protein resides in the cytoplasm. It catalyses the reaction RNA(n) + a ribonucleoside 5'-triphosphate = RNA(n+1) + diphosphate. DNA-dependent RNA polymerase (RNAP) catalyzes the transcription of DNA into RNA using the four ribonucleoside triphosphates as substrates. Forms part of the jaw domain. This chain is DNA-directed RNA polymerase subunit Rpo1C, found in Saccharolobus islandicus (strain Y.N.15.51 / Yellowstone #2) (Sulfolobus islandicus).